A 240-amino-acid chain; its full sequence is Ubiquitin domain-containing protein 2 (240 aa).

The tract at residues 1–48 is disordered; sequence MGGCVGSHHDSSGSLNENSDGTGVALGRNQPLKREKPKWKSDYPMTDG. Positions 12-21 are enriched in polar residues; sequence SGSLNENSDG. Positions 32–41 are enriched in basic and acidic residues; the sequence is LKREKPKWKS. Positions 152–227 constitute a Ubiquitin-like domain; that stretch reads CQLRLRLSTG…VQVIVSQPPT (76 aa).

It localises to the cytoplasm. The sequence is that of Ubiquitin domain-containing protein 2 (ubtd2) from Danio rerio (Zebrafish).